We begin with the raw amino-acid sequence, 1288 residues long: SH3 domain and tetratricopeptide repeat-containing protein 2 (1288 aa).

2 SH3 domains span residues 176 to 240 (EGHF…PLPL) and 268 to 331 (IGRG…PDSY). Residues 386–395 (NPPNDLSASQ) show a composition bias toward polar residues. Disordered stretches follow at residues 386–405 (NPPN…VRPG) and 410–444 (EHQA…LPEP). 8 TPR repeats span residues 528–561 (ARLC…LNGA), 757–790 (RALC…GQLL), 836–869 (GVIY…AQEV), 1001–1037 (GRLL…FIDL), 1084–1118 (LKLY…LARR), 1119–1152 (LKAV…ATLA), 1166–1199 (LVAF…CPPW), and 1210–1244 (AKVY…AVLL).

As to expression, strongly expressed in brain and spinal cord. Expressed at equal level in spinal cord and sciatic nerve. Weakly expressed in striated muscle.

The protein is SH3 domain and tetratricopeptide repeat-containing protein 2 (SH3TC2) of Homo sapiens (Human).